The chain runs to 467 residues: A-type ATP synthase subunit B (467 aa).

The segment at 95–114 (GKGQPRDHMPLPPPEDFRDV) is disordered.

Belongs to the ATPase alpha/beta chains family. As to quaternary structure, has multiple subunits with at least A(3), B(3), C, D, E, F, H, I and proteolipid K(x).

It localises to the cell membrane. In terms of biological role, component of the A-type ATP synthase that produces ATP from ADP in the presence of a proton gradient across the membrane. The B chain is a regulatory subunit. In Pyrobaculum aerophilum (strain ATCC 51768 / DSM 7523 / JCM 9630 / CIP 104966 / NBRC 100827 / IM2), this protein is A-type ATP synthase subunit B.